Here is a 638-residue protein sequence, read N- to C-terminus: Glucans biosynthesis glucosyltransferase H (638 aa).

6 consecutive transmembrane segments (helical) span residues 60–82 (FYLIGGTMAMSLIATWVMLAVMW), 97–119 (FMFLFAWVTMSFASALAGFFCVV), 415–437 (IGHYFTAPMWGLLMLVGIAIPLV), 464–486 (LWIFTFTMFVLLAPKLLAYFALL), 499–521 (LRVLLSILLESILAALMAPVVMY), and 578–600 (LAMWMSPVVLGMAFSVPVVALTS).

Belongs to the glycosyltransferase 2 family. OpgH subfamily.

Its subcellular location is the cell inner membrane. The protein operates within glycan metabolism; osmoregulated periplasmic glucan (OPG) biosynthesis. Its function is as follows. Involved in the biosynthesis of osmoregulated periplasmic glucans (OPGs). This is Glucans biosynthesis glucosyltransferase H from Xylella fastidiosa (strain 9a5c).